A 366-amino-acid polypeptide reads, in one-letter code: tRNA/tmRNA (uracil-C(5))-methyltransferase (366 aa).

S-adenosyl-L-methionine is bound by residues Gln-190, Tyr-218, Asn-223, Glu-239, and Asp-299. Residue Cys-324 is the Nucleophile of the active site. Glu-358 acts as the Proton acceptor in catalysis.

Belongs to the class I-like SAM-binding methyltransferase superfamily. RNA M5U methyltransferase family. TrmA subfamily.

It carries out the reaction uridine(54) in tRNA + S-adenosyl-L-methionine = 5-methyluridine(54) in tRNA + S-adenosyl-L-homocysteine + H(+). The catalysed reaction is uridine(341) in tmRNA + S-adenosyl-L-methionine = 5-methyluridine(341) in tmRNA + S-adenosyl-L-homocysteine + H(+). In terms of biological role, dual-specificity methyltransferase that catalyzes the formation of 5-methyluridine at position 54 (m5U54) in all tRNAs, and that of position 341 (m5U341) in tmRNA (transfer-mRNA). In Escherichia coli O7:K1 (strain IAI39 / ExPEC), this protein is tRNA/tmRNA (uracil-C(5))-methyltransferase.